We begin with the raw amino-acid sequence, 593 residues long: A-type ATP synthase subunit A (593 aa).

236-243 (GPFGSGKT) contributes to the ATP binding site.

The protein belongs to the ATPase alpha/beta chains family. In terms of assembly, has multiple subunits with at least A(3), B(3), C, D, E, F, H, I and proteolipid K(x).

The protein localises to the cell membrane. The enzyme catalyses ATP + H2O + 4 H(+)(in) = ADP + phosphate + 5 H(+)(out). Its function is as follows. Produces ATP from ADP in the presence of a proton gradient across the membrane. The archaeal alpha chain is a catalytic subunit. Component of the A-type ATP synthase that produces ATP from ADP in the presence of a proton gradient across the membrane. The A chain is the catalytic subunit. In Pyrobaculum aerophilum (strain ATCC 51768 / DSM 7523 / JCM 9630 / CIP 104966 / NBRC 100827 / IM2), this protein is A-type ATP synthase subunit A.